We begin with the raw amino-acid sequence, 149 residues long: Protein NrdI (149 aa).

It belongs to the NrdI family.

Functionally, probably involved in ribonucleotide reductase function. The chain is Protein NrdI from Malacoplasma penetrans (strain HF-2) (Mycoplasma penetrans).